A 644-amino-acid chain; its full sequence is ATP-dependent zinc metalloprotease FtsH (644 aa).

Residues 1–4 lie on the Cytoplasmic side of the membrane; sequence MAKN. The helical transmembrane segment at 5-25 threads the bilayer; sequence LILWLVIAVVLMSVFQSFGPS. Over 26–98 the chain is Periplasmic; that stretch reads ESNGRKVDYS…VGEPPEEPSL (73 aa). The helical transmembrane segment at 99–119 threads the bilayer; it reads LASIFISWFPMLLLIGVWIFF. The Cytoplasmic portion of the chain corresponds to 120-644; sequence MRQMQGGGGK…NTMSEQLGDK (525 aa). Position 192 to 199 (192 to 199) interacts with ATP; the sequence is GPPGTGKT. His-414 provides a ligand contact to Zn(2+). Glu-415 is a catalytic residue. Residues His-418 and Asp-492 each contribute to the Zn(2+) site. The segment at 599–644 is disordered; it reads RPPAGWEDPNGTNNSDSNGTPQAPRPVDEPRTPNPGNTMSEQLGDK. Composition is skewed to polar residues over residues 608 to 619 and 632 to 644; these read NGTNNSDSNGTP and NPGNTMSEQLGDK.

The protein in the central section; belongs to the AAA ATPase family. It in the C-terminal section; belongs to the peptidase M41 family. As to quaternary structure, homohexamer. It depends on Zn(2+) as a cofactor.

It is found in the cell inner membrane. Its function is as follows. Acts as a processive, ATP-dependent zinc metallopeptidase for both cytoplasmic and membrane proteins. Plays a role in the quality control of integral membrane proteins. The polypeptide is ATP-dependent zinc metalloprotease FtsH (Salmonella typhi).